Here is a 355-residue protein sequence, read N- to C-terminus: Peptide chain release factor 1 (355 aa).

At glutamine 233 the chain carries N5-methylglutamine.

This sequence belongs to the prokaryotic/mitochondrial release factor family. In terms of processing, methylated by PrmC. Methylation increases the termination efficiency of RF1.

The protein localises to the cytoplasm. Its function is as follows. Peptide chain release factor 1 directs the termination of translation in response to the peptide chain termination codons UAG and UAA. This Caldicellulosiruptor saccharolyticus (strain ATCC 43494 / DSM 8903 / Tp8T 6331) protein is Peptide chain release factor 1.